The chain runs to 150 residues: Globin-5 (150 aa).

Residues 11–150 enclose the Globin domain; sequence PLSAAEKTKI…MICILLRSAY (140 aa). Heme b contacts are provided by His-74 and His-106.

It belongs to the globin family. In terms of assembly, monomer at high oxygen tension and high pH and dimeric at low oxygen tension and lower pH.

This is Globin-5 from Petromyzon marinus (Sea lamprey).